The sequence spans 230 residues: MSSVLQGFTKSLAMTFVSEIGDKTFFAAAILAMRYPRRLVLAGCLSALIVMTILSATLGWAAPNLISRKWTHHITTLLFFGFGLWSLWDGFKEGGGGSEELAEVEAELDADLKANGKSPKDSSKREDENKKQNRAFLTQFFSPIFLKAFSINFFGEWGDKSQLATIGLAADENPFGVVLGGVVAQFLCTTAAVIGGKSLASQISERIVALSGGMLFIIFGIQSYLTSVEA.

The next 6 membrane-spanning stretches (helical) occupy residues Leu-12–Ala-32, Leu-39–Gly-59, Thr-71–Phe-91, Ala-135–Gly-155, Phe-175–Gly-195, and Ile-207–Ser-227.

It belongs to the GDT1 family.

Its subcellular location is the membrane. The polypeptide is GDT1-like protein 4 (Arabidopsis thaliana (Mouse-ear cress)).